The chain runs to 176 residues: MIDDDGYRPNVGIVICNRQGQVMWARRFGQHSWQFPQGGINPGESAEQAMYRELFEEVGLSRKDVRILASTRNWLRYKLPKRLVRWDTKPVCIGQKQKWFLLQLMSADAEINMQTSSTPEFDGWRWVSYWYPVRQVVSFKRDVYRRVMKEFASVVMALQDNTPKLQSAPAYRRKRG.

Residues 6–149 (GYRPNVGIVI…KRDVYRRVMK (144 aa)) form the Nudix hydrolase domain. Positions 38–59 (GGINPGESAEQAMYRELFEEVG) match the Nudix box motif.

Belongs to the Nudix hydrolase family. RppH subfamily. A divalent metal cation is required as a cofactor.

Functionally, accelerates the degradation of transcripts by removing pyrophosphate from the 5'-end of triphosphorylated RNA, leading to a more labile monophosphorylated state that can stimulate subsequent ribonuclease cleavage. This is RNA pyrophosphohydrolase from Salmonella arizonae (strain ATCC BAA-731 / CDC346-86 / RSK2980).